Here is a 457-residue protein sequence, read N- to C-terminus: Carboxypeptidase N catalytic chain (457 aa).

Positions 1–23 are cleaved as a signal peptide; the sequence is MPDLPSAFLPLLLLSKFVTPVTF. Residues 24 to 338 form the Peptidase M14 domain; sequence RHHRYDDLVR…EALIQFLEQV (315 aa). Cysteine 42 and cysteine 104 are disulfide-bonded. Zn(2+)-binding residues include histidine 86, glutamate 89, and histidine 216. Cysteine 271 and cysteine 311 are oxidised to a cystine. Glutamate 308 (proton donor/acceptor) is an active-site residue. 3 O-linked (GalNAc...) threonine glycosylation sites follow: threonine 400, threonine 402, and threonine 409. The disordered stretch occupies residues 418–457; that stretch reads SSSQVYPVQRAPGRGQGGRAKQPRTSRKKDPATKRHRGPA.

The protein belongs to the peptidase M14 family. As to quaternary structure, tetramer of two catalytic chains and two glycosylated inactive chains. It depends on Zn(2+) as a cofactor. As to expression, mainly expressed in liver. Also detected in lung, stomach, intestine, spleen and kidney.

It is found in the secreted. The protein localises to the extracellular space. The enzyme catalyses Release of a C-terminal basic amino acid, preferentially lysine.. Functionally, protects the body from potent vasoactive and inflammatory peptides containing C-terminal Arg or Lys (such as kinins or anaphylatoxins) which are released into the circulation. The protein is Carboxypeptidase N catalytic chain (Cpn1) of Mus musculus (Mouse).